Reading from the N-terminus, the 345-residue chain is MKVAIIGATGYGGIELIRLLEQHPYFSIASLHSFSQVGECITNVYPHFQNVLVHTLQEIDAEEIVKEAEIVFLATPAGVSAELTPKLLAVGLKVIDLSGDFRMKDPFIYEQWYKRAAAKEEILSKAVYGLSEWKRSEVQNANLIANPGCFATAALLATLPLVRSGIIEEDSIIIDAKSGVSGAGKTPTTMTHFPELYDNLRIYKVNEHQHVPEIEQMLAEWNRETKPITFSTHLIPISRGIMVTLYAKVKREMEIEQLQKLYEETYEQSPFIRIRLQGEFPSPKEVRGSNYCDMGIAYDERTGRVTVVSVIDNMMKGAAGQAIQNANIIAGLEETTGLQHMPLYL.

Residue C149 is part of the active site.

The protein belongs to the NAGSA dehydrogenase family. Type 1 subfamily.

It is found in the cytoplasm. The enzyme catalyses N-acetyl-L-glutamate 5-semialdehyde + phosphate + NADP(+) = N-acetyl-L-glutamyl 5-phosphate + NADPH + H(+). It participates in amino-acid biosynthesis; L-arginine biosynthesis; N(2)-acetyl-L-ornithine from L-glutamate: step 3/4. In terms of biological role, catalyzes the NADPH-dependent reduction of N-acetyl-5-glutamyl phosphate to yield N-acetyl-L-glutamate 5-semialdehyde. The polypeptide is N-acetyl-gamma-glutamyl-phosphate reductase (Bacillus cereus (strain AH187)).